A 648-amino-acid polypeptide reads, in one-letter code: 1-deoxy-D-xylulose-5-phosphate synthase (648 aa).

Thiamine diphosphate is bound by residues H72 and 113–115; that span reads GHA. D144 contacts Mg(2+). Thiamine diphosphate contacts are provided by residues 145-146, N173, and E363; that span reads GA. N173 contributes to the Mg(2+) binding site.

It belongs to the transketolase family. DXPS subfamily. Homodimer. Mg(2+) is required as a cofactor. Thiamine diphosphate serves as cofactor.

It carries out the reaction D-glyceraldehyde 3-phosphate + pyruvate + H(+) = 1-deoxy-D-xylulose 5-phosphate + CO2. It participates in metabolic intermediate biosynthesis; 1-deoxy-D-xylulose 5-phosphate biosynthesis; 1-deoxy-D-xylulose 5-phosphate from D-glyceraldehyde 3-phosphate and pyruvate: step 1/1. Functionally, catalyzes the acyloin condensation reaction between C atoms 2 and 3 of pyruvate and glyceraldehyde 3-phosphate to yield 1-deoxy-D-xylulose-5-phosphate (DXP). The sequence is that of 1-deoxy-D-xylulose-5-phosphate synthase from Symbiobacterium thermophilum (strain DSM 24528 / JCM 14929 / IAM 14863 / T).